The sequence spans 517 residues: GMP synthase [glutamine-hydrolyzing] (517 aa).

Positions 11–202 (KIIVLDFGSQ…AFDVCGAKDN (192 aa)) constitute a Glutamine amidotransferase type-1 domain. Residue Cys-88 is the Nucleophile of the active site. Active-site residues include His-176 and Glu-178. In terms of domain architecture, GMPS ATP-PPase spans 203–392 (WTMDDFIKLS…LGLPHDLVWR (190 aa)). Residue 230-236 (SGGVDSS) coordinates ATP.

Homodimer.

It carries out the reaction XMP + L-glutamine + ATP + H2O = GMP + L-glutamate + AMP + diphosphate + 2 H(+). The protein operates within purine metabolism; GMP biosynthesis; GMP from XMP (L-Gln route): step 1/1. Its function is as follows. Catalyzes the synthesis of GMP from XMP. The polypeptide is GMP synthase [glutamine-hydrolyzing] (Lactobacillus delbrueckii subsp. bulgaricus (strain ATCC 11842 / DSM 20081 / BCRC 10696 / JCM 1002 / NBRC 13953 / NCIMB 11778 / NCTC 12712 / WDCM 00102 / Lb 14)).